We begin with the raw amino-acid sequence, 680 residues long: Zinc finger protein 334 (680 aa).

Residues 10 to 81 form the KRAB domain; it reads VSFQDLTVNF…EEFSNQNYPD (72 aa). 14 consecutive C2H2-type zinc fingers follow at residues 237-259, 265-287, 293-315, 321-343, 349-371, 377-399, 405-427, 433-455, 461-483, 544-566, 572-594, 600-622, 628-650, and 656-678; these read NECN…QRIH, YVCS…RRIH, YECS…QKIH, YECN…FRSH, YECK…QRTH, NECK…QRIH, YECS…RRSH, YECS…QITH, YECN…QRTH, YECN…RRIH, YECN…QKIH, and YECN…QKSH.

This sequence belongs to the krueppel C2H2-type zinc-finger protein family.

Its subcellular location is the nucleus. In terms of biological role, may be involved in transcriptional regulation. The polypeptide is Zinc finger protein 334 (ZNF334) (Homo sapiens (Human)).